We begin with the raw amino-acid sequence, 318 residues long: Cytochrome f (318 aa).

The first 33 residues, 1 to 33 (MKNTFSWIKKEITRSISLSLMIYIITRTSISNA), serve as a signal peptide directing secretion. Heme is bound by residues Tyr34, Cys54, Cys57, and His58. Residues 284-304 (VQGLLFFLASVILAQIFLVLK) form a helical membrane-spanning segment.

It belongs to the cytochrome f family. In terms of assembly, the 4 large subunits of the cytochrome b6-f complex are cytochrome b6, subunit IV (17 kDa polypeptide, petD), cytochrome f and the Rieske protein, while the 4 small subunits are PetG, PetL, PetM and PetN. The complex functions as a dimer. Requires heme as cofactor.

The protein resides in the plastid. It localises to the chloroplast thylakoid membrane. In terms of biological role, component of the cytochrome b6-f complex, which mediates electron transfer between photosystem II (PSII) and photosystem I (PSI), cyclic electron flow around PSI, and state transitions. The sequence is that of Cytochrome f from Oenothera biennis (German evening primrose).